Here is a 61-residue protein sequence, read N- to C-terminus: Small ribosomal subunit protein uS14B (61 aa).

Residues C24, C27, C40, and C43 each contribute to the Zn(2+) site.

It belongs to the universal ribosomal protein uS14 family. Zinc-binding uS14 subfamily. Part of the 30S ribosomal subunit. Contacts proteins S3 and S10. Zn(2+) serves as cofactor.

Binds 16S rRNA, required for the assembly of 30S particles and may also be responsible for determining the conformation of the 16S rRNA at the A site. This is Small ribosomal subunit protein uS14B from Myxococcus xanthus (strain DK1622).